Here is a 93-residue protein sequence, read N- to C-terminus: Integration host factor subunit beta (93 aa).

It belongs to the bacterial histone-like protein family. Heterodimer of an alpha and a beta chain.

Functionally, this protein is one of the two subunits of integration host factor, a specific DNA-binding protein that functions in genetic recombination as well as in transcriptional and translational control. This chain is Integration host factor subunit beta, found in Vibrio vulnificus (strain YJ016).